Consider the following 174-residue polypeptide: ATP-dependent protease subunit HslV (174 aa).

Thr-2 is an active-site residue. Positions 157, 160, and 163 each coordinate Na(+).

Belongs to the peptidase T1B family. HslV subfamily. A double ring-shaped homohexamer of HslV is capped on each side by a ring-shaped HslU homohexamer. The assembly of the HslU/HslV complex is dependent on binding of ATP.

The protein resides in the cytoplasm. The enzyme catalyses ATP-dependent cleavage of peptide bonds with broad specificity.. With respect to regulation, allosterically activated by HslU binding. Functionally, protease subunit of a proteasome-like degradation complex believed to be a general protein degrading machinery. This Shewanella baltica (strain OS195) protein is ATP-dependent protease subunit HslV.